Reading from the N-terminus, the 197-residue chain is Probable host range protein 2 (197 aa).

The disordered stretch occupies residues 172-197; the sequence is DHDDNDNADDDEEDDDEVNDIEDDYE. The segment covering 174–197 has biased composition (acidic residues); the sequence is DDNDNADDDEEDDDEVNDIEDDYE.

The protein belongs to the poxviridae C7 protein family.

This Ovis aries (Sheep) protein is Probable host range protein 2.